Reading from the N-terminus, the 243-residue chain is Proteasome subunit beta 1 (243 aa).

Residues 1–14 are compositionally biased toward polar residues; it reads MRAPQHNSDFSRTV. Residues 1–34 are disordered; the sequence is MRAPQHNSDFSRTVDQLADDPNPYEPEIGSMPQN. The propeptide at 1 to 48 is removed in mature form; by autocatalysis; sequence MRAPQHNSDFSRTVDQLADDPNPYEPEIGSMPQNDLTRADLDNVNKTG. The active-site Nucleophile is Thr-49.

It belongs to the peptidase T1B family. The 20S proteasome core is composed of 14 alpha and 14 beta subunits that assemble into four stacked heptameric rings, resulting in a barrel-shaped structure. The two inner rings, each composed of seven catalytic beta subunits, are sandwiched by two outer rings, each composed of seven alpha subunits. The catalytic chamber with the active sites is on the inside of the barrel. Has a gated structure, the ends of the cylinder being occluded by the N-termini of the alpha-subunits. Is capped at one or both ends by the proteasome regulatory ATPase, PAN.

The protein localises to the cytoplasm. The catalysed reaction is Cleavage of peptide bonds with very broad specificity.. Its activity is regulated as follows. The formation of the proteasomal ATPase PAN-20S proteasome complex, via the docking of the C-termini of PAN into the intersubunit pockets in the alpha-rings, triggers opening of the gate for substrate entry. Interconversion between the open-gate and close-gate conformations leads to a dynamic regulation of the 20S proteasome proteolysis activity. Functionally, component of the proteasome core, a large protease complex with broad specificity involved in protein degradation. The sequence is that of Proteasome subunit beta 1 from Haloterrigena turkmenica (strain ATCC 51198 / DSM 5511 / JCM 9101 / NCIMB 13204 / VKM B-1734 / 4k) (Halococcus turkmenicus).